A 55-amino-acid chain; its full sequence is Large ribosomal subunit protein bL33 (55 aa).

This sequence belongs to the bacterial ribosomal protein bL33 family.

The chain is Large ribosomal subunit protein bL33 from Sodalis glossinidius (strain morsitans).